The primary structure comprises 609 residues: Ataxin-10 homolog (609 aa).

3 disordered regions span residues 265 to 293 (KSTT…TTTG), 405 to 426 (KQQE…SKDS), and 461 to 490 (SDTN…KGFN). The span at 266–292 (STTESTTESTTTESTDSTTDSTTTTTT) shows a compositional bias: low complexity. Positions 466–479 (SSSSSSSSSSSTTT) are enriched in low complexity. Polar residues predominate over residues 480–490 (DGETVTSKGFN).

The protein belongs to the ATXN10 family.

Functionally, may play a role in the regulation of cytokinesis. This chain is Ataxin-10 homolog (atxn10), found in Dictyostelium discoideum (Social amoeba).